Here is a 234-residue protein sequence, read N- to C-terminus: Putative N-acetylmannosamine-6-phosphate 2-epimerase (234 aa).

It belongs to the NanE family.

The catalysed reaction is an N-acyl-D-glucosamine 6-phosphate = an N-acyl-D-mannosamine 6-phosphate. Its pathway is amino-sugar metabolism; N-acetylneuraminate degradation; D-fructose 6-phosphate from N-acetylneuraminate: step 3/5. Functionally, converts N-acetylmannosamine-6-phosphate (ManNAc-6-P) to N-acetylglucosamine-6-phosphate (GlcNAc-6-P). In Klebsiella pneumoniae subsp. pneumoniae (strain ATCC 700721 / MGH 78578), this protein is Putative N-acetylmannosamine-6-phosphate 2-epimerase.